The following is a 151-amino-acid chain: Proteolipid protein 2 (151 aa).

The region spanning 19–137 is the MARVEL domain; it reads FSRTKKGILL…DAYITFPLKQ (119 aa). 4 consecutive transmembrane segments (helical) span residues 25–45, 48–68, 85–105, and 112–132; these read GILL…FSAS, AYSS…VFYM, FFRS…VLVE, and IVAG…AYIT.

The protein resides in the membrane. Its function is as follows. May play a role in cell differentiation in the intestinal epithelium. This Rattus norvegicus (Rat) protein is Proteolipid protein 2 (Plp2).